The sequence spans 396 residues: Purine ribonucleoside efflux pump NepI (396 aa).

Over 1-21 (MSEFIAENRGADAITRPNWSA) the chain is Cytoplasmic. The chain crosses the membrane as a helical span at residues 22 to 42 (VFSVAFCVACLIIVEFLPVSL). Over 43–54 (LTPMAQDLGISE) the chain is Periplasmic. Residues 55–75 (GVAGQSVTVTAFVAMFASLFI) traverse the membrane as a helical segment. Residues 76 to 85 (TQTIQATDRR) are Cytoplasmic-facing. The helical transmembrane segment at 86–106 (YVVILFAVLLTLSCLLVSFAN) threads the bilayer. A topological domain (periplasmic) is located at residue Ser-107. Residues 108 to 128 (FSLLLIGRACLGLALGGFWAM) traverse the membrane as a helical segment. Residues 129-147 (SASLTMRLVPPRTVPKALS) lie on the Cytoplasmic side of the membrane. The chain crosses the membrane as a helical span at residues 148 to 168 (VIFGAVSIALVIAAPLGSFLG). At 169-175 (ELIGWRN) the chain is on the periplasmic side. A helical transmembrane segment spans residues 176–196 (VFNAAAAMGVLCIFWIIKSLP). The Cytoplasmic segment spans residues 197-215 (SLPGEPSHQKQNTFRLLQR). The helical transmembrane segment at 216–236 (PGVMAGMIAIFMSFAGQFAFF) threads the bilayer. Residues 237 to 255 (TYIRPVYMNLAGFGVDGLT) are Periplasmic-facing. The helical transmembrane segment at 256 to 276 (LVLLSFGIASFVGTSLSSFIL) threads the bilayer. Over 277–281 (KRSVK) the chain is Cytoplasmic. A helical membrane pass occupies residues 282–302 (LALAGAPFVLALSALVLTLWG). The Periplasmic segment spans residues 303 to 305 (SDK). Residues 306-326 (IVATGVAIIWGLTFALIPVGW) form a helical membrane-spanning segment. The Cytoplasmic segment spans residues 327–343 (STWITRSLADQAEKAGS). Residues 344-364 (IQVAVIQLANTCGAAIGGYAL) traverse the membrane as a helical segment. Residues 365–366 (DN) are Periplasmic-facing. A helical transmembrane segment spans residues 367–387 (IGLTSPLMLSGTLMLLTALLV). Topologically, residues 388–396 (TAKVKMKKS) are cytoplasmic.

This sequence belongs to the major facilitator superfamily. DHA1 family. NepI (TC 2.A.1.2.26) subfamily.

It is found in the cell inner membrane. It carries out the reaction inosine(in) + H(+)(out) = inosine(out) + H(+)(in). The enzyme catalyses guanosine(in) + H(+)(out) = guanosine(out) + H(+)(in). Involved in the efflux of purine ribonucleosides, such as inosine and guanosine. The polypeptide is Purine ribonucleoside efflux pump NepI (Escherichia coli O1:K1 / APEC).